Consider the following 161-residue polypeptide: Allophycocyanin alpha chain (161 aa).

Position 71 is an N4-methylasparagine (N71). C81 is a binding site for (2R,3E)-phycocyanobilin.

The protein belongs to the phycobiliprotein family. As to quaternary structure, heterodimer of an alpha and a beta chain. Contains one covalently linked phycocyanobilin chromophore.

Its subcellular location is the cellular thylakoid membrane. In terms of biological role, light-harvesting photosynthetic bile pigment-protein from the phycobiliprotein complex. Allophycocyanin has a maximum absorption at approximately 650 nanometers. This Synechocystis sp. (strain PCC 6714) (Aphanocapsa sp. (strain PCC 6714)) protein is Allophycocyanin alpha chain (apcA).